The following is a 161-amino-acid chain: Regulator of ribonuclease activity A (161 aa).

The protein belongs to the RraA family. In terms of assembly, homotrimer. Binds to both RNA-binding sites in the C-terminal region of Rne and to RhlB.

The protein resides in the cytoplasm. In terms of biological role, globally modulates RNA abundance by binding to RNase E (Rne) and regulating its endonucleolytic activity. Can modulate Rne action in a substrate-dependent manner by altering the composition of the degradosome. Modulates RNA-binding and helicase activities of the degradosome. The protein is Regulator of ribonuclease activity A of Yersinia pseudotuberculosis serotype O:1b (strain IP 31758).